The primary structure comprises 383 residues: 8-amino-7-oxononanoate synthase (383 aa).

Position 22 (Arg-22) interacts with substrate. 109 to 110 (GF) contributes to the pyridoxal 5'-phosphate binding site. His-134 provides a ligand contact to substrate. Positions 178, 206, and 232 each coordinate pyridoxal 5'-phosphate. N6-(pyridoxal phosphate)lysine is present on Lys-235. A substrate-binding site is contributed by Thr-348.

The protein belongs to the class-II pyridoxal-phosphate-dependent aminotransferase family. BioF subfamily. As to quaternary structure, homodimer. Pyridoxal 5'-phosphate is required as a cofactor.

It carries out the reaction 6-carboxyhexanoyl-[ACP] + L-alanine + H(+) = (8S)-8-amino-7-oxononanoate + holo-[ACP] + CO2. Its pathway is cofactor biosynthesis; biotin biosynthesis. In terms of biological role, catalyzes the decarboxylative condensation of pimeloyl-[acyl-carrier protein] and L-alanine to produce 8-amino-7-oxononanoate (AON), [acyl-carrier protein], and carbon dioxide. The sequence is that of 8-amino-7-oxononanoate synthase from Vibrio parahaemolyticus serotype O3:K6 (strain RIMD 2210633).